We begin with the raw amino-acid sequence, 174 residues long: Co-chaperone protein HscB homolog (174 aa).

A J domain is found at 2 to 74; it reads NYFELFKFSP…IRRAEHLLSL (73 aa).

This sequence belongs to the HscB family. Interacts with HscA and stimulates its ATPase activity.

Its function is as follows. Co-chaperone involved in the maturation of iron-sulfur cluster-containing proteins. Seems to help targeting proteins to be folded toward HscA. In Shewanella sp. (strain W3-18-1), this protein is Co-chaperone protein HscB homolog.